Consider the following 164-residue polypeptide: MNNTDLLEKIIRHQQNKDPAYPFREHLLMQLCIRVNKKIQNSTSEFFGAYGINHSVYMVLAILSMEEQHCLSPSEISQKLQFTRTNITRITDFLEKAGYIKRTDSREDRRTKKISLTSEGMFFIQRLTLAQNTYLKELWSNLTCDECEMFEVISKKLLAHFSDI.

Residues 25-159 enclose the HTH marR-type domain; the sequence is EHLLMQLCIR…FEVISKKLLA (135 aa).

Its subcellular location is the cytoplasm. This Escherichia coli protein is HTH-type transcriptional regulator PapX (papX).